The chain runs to 414 residues: Serine hydroxymethyltransferase (414 aa).

(6S)-5,6,7,8-tetrahydrofolate-binding positions include Leu121 and 125–127 (GHL). Residue Lys229 is modified to N6-(pyridoxal phosphate)lysine.

It belongs to the SHMT family. Homodimer. Pyridoxal 5'-phosphate serves as cofactor.

The protein localises to the cytoplasm. It carries out the reaction (6R)-5,10-methylene-5,6,7,8-tetrahydrofolate + glycine + H2O = (6S)-5,6,7,8-tetrahydrofolate + L-serine. Its pathway is one-carbon metabolism; tetrahydrofolate interconversion. The protein operates within amino-acid biosynthesis; glycine biosynthesis; glycine from L-serine: step 1/1. Catalyzes the reversible interconversion of serine and glycine with tetrahydrofolate (THF) serving as the one-carbon carrier. This reaction serves as the major source of one-carbon groups required for the biosynthesis of purines, thymidylate, methionine, and other important biomolecules. Also exhibits THF-independent aldolase activity toward beta-hydroxyamino acids, producing glycine and aldehydes, via a retro-aldol mechanism. The chain is Serine hydroxymethyltransferase from Variovorax paradoxus (strain S110).